We begin with the raw amino-acid sequence, 543 residues long: CTP synthase (543 aa).

Residues 1–267 are amidoligase domain; that stretch reads MKQTKYIFVT…LSPIAEILDL (267 aa). Residue S15 coordinates CTP. S15 lines the UTP pocket. Residues 16-21 and D73 contribute to the ATP site; that span reads SLGKGI. D73 and E141 together coordinate Mg(2+). Residues 148–150, 188–193, and K224 contribute to the CTP site; these read DIE and KTKPTQ. Residues 188–193 and K224 contribute to the UTP site; that span reads KTKPTQ. The Glutamine amidotransferase type-1 domain maps to 292-543; that stretch reads KIAFVGKYVD…IKAAINYEDN (252 aa). Residue G354 coordinates L-glutamine. C381 functions as the Nucleophile; for glutamine hydrolysis in the catalytic mechanism. L-glutamine contacts are provided by residues 382 to 385, E405, and R473; that span reads LGMQ. Residues H516 and E518 contribute to the active site.

Belongs to the CTP synthase family. In terms of assembly, homotetramer.

The catalysed reaction is UTP + L-glutamine + ATP + H2O = CTP + L-glutamate + ADP + phosphate + 2 H(+). It carries out the reaction L-glutamine + H2O = L-glutamate + NH4(+). It catalyses the reaction UTP + NH4(+) + ATP = CTP + ADP + phosphate + 2 H(+). Its pathway is pyrimidine metabolism; CTP biosynthesis via de novo pathway; CTP from UDP: step 2/2. With respect to regulation, allosterically activated by GTP, when glutamine is the substrate; GTP has no effect on the reaction when ammonia is the substrate. The allosteric effector GTP functions by stabilizing the protein conformation that binds the tetrahedral intermediate(s) formed during glutamine hydrolysis. Inhibited by the product CTP, via allosteric rather than competitive inhibition. Catalyzes the ATP-dependent amination of UTP to CTP with either L-glutamine or ammonia as the source of nitrogen. Regulates intracellular CTP levels through interactions with the four ribonucleotide triphosphates. This Campylobacter jejuni subsp. jejuni serotype O:6 (strain 81116 / NCTC 11828) protein is CTP synthase.